The sequence spans 294 residues: Phosphoribosylaminoimidazole-succinocarboxamide synthase (294 aa).

It belongs to the SAICAR synthetase family.

The enzyme catalyses 5-amino-1-(5-phospho-D-ribosyl)imidazole-4-carboxylate + L-aspartate + ATP = (2S)-2-[5-amino-1-(5-phospho-beta-D-ribosyl)imidazole-4-carboxamido]succinate + ADP + phosphate + 2 H(+). The protein operates within purine metabolism; IMP biosynthesis via de novo pathway; 5-amino-1-(5-phospho-D-ribosyl)imidazole-4-carboxamide from 5-amino-1-(5-phospho-D-ribosyl)imidazole-4-carboxylate: step 1/2. In Rhodococcus opacus (strain B4), this protein is Phosphoribosylaminoimidazole-succinocarboxamide synthase.